Reading from the N-terminus, the 108-residue chain is Protein FMC1 homolog (108 aa).

It belongs to the FMC1 family.

This Caenorhabditis elegans protein is Protein FMC1 homolog.